A 213-amino-acid chain; its full sequence is Orotate phosphoribosyltransferase (213 aa).

A 5-phospho-alpha-D-ribose 1-diphosphate-binding site is contributed by Lys-26. Position 34–35 (34–35 (FF)) interacts with orotate. 5-phospho-alpha-D-ribose 1-diphosphate contacts are provided by residues 72–73 (YK), Arg-99, Lys-100, Lys-103, His-105, and 124–132 (DDVITAGTA). The orotate site is built by Thr-128 and Arg-156.

The protein belongs to the purine/pyrimidine phosphoribosyltransferase family. PyrE subfamily. As to quaternary structure, homodimer. Mg(2+) is required as a cofactor.

The enzyme catalyses orotidine 5'-phosphate + diphosphate = orotate + 5-phospho-alpha-D-ribose 1-diphosphate. The protein operates within pyrimidine metabolism; UMP biosynthesis via de novo pathway; UMP from orotate: step 1/2. In terms of biological role, catalyzes the transfer of a ribosyl phosphate group from 5-phosphoribose 1-diphosphate to orotate, leading to the formation of orotidine monophosphate (OMP). The protein is Orotate phosphoribosyltransferase of Pseudomonas savastanoi pv. phaseolicola (strain 1448A / Race 6) (Pseudomonas syringae pv. phaseolicola (strain 1448A / Race 6)).